The following is a 725-amino-acid chain: N-alpha-acetyltransferase 35, NatC auxiliary subunit (725 aa).

Position 187 is a phosphoserine (S187). The interval 548 to 573 (ERIMEEQQKGRSSKKTKKKKKVRPLS) is disordered. Over residues 558-571 (RSSKKTKKKKKVRP) the composition is skewed to basic residues.

This sequence belongs to the MAK10 family. In terms of assembly, component of the N-terminal acetyltransferase C (NatC) complex, which is composed of NAA35, NAA38 and NAA30.

The protein resides in the cytoplasm. In terms of biological role, auxillary component of the N-terminal acetyltransferase C (NatC) complex which catalyzes acetylation of N-terminal methionine residues. N-terminal acetylation protects proteins from ubiquitination and degradation by the N-end rule pathway. Involved in regulation of apoptosis and proliferation of smooth muscle cells. The sequence is that of N-alpha-acetyltransferase 35, NatC auxiliary subunit (NAA35) from Macaca fascicularis (Crab-eating macaque).